A 502-amino-acid chain; its full sequence is Cytochrome P450 monooxygenase orf6 (502 aa).

Residues 3 to 25 (ALWVLAVALVAYFLCLSIYRLFL) form a helical membrane-spanning segment. Asparagine 382 carries an N-linked (GlcNAc...) asparagine glycan. Cysteine 445 lines the heme pocket.

Belongs to the cytochrome P450 family. Heme is required as a cofactor.

The protein resides in the membrane. It participates in mycotoxin biosynthesis. Functionally, cytochrome P450 monooxygenase; part of the gene cluster that mediates the biosynthesis of brefeldin A (BFA), a protein transport inhibitor that shows antiviral, antifungal, and antitumor properties. The proposed biosynthesis of BFA involves formation of an acyclic polyketide chain that is differentially tailored throughout the backbone. The highly reducing polyketide synthase Bref-PKS is proposed to synthesize the precisely reduced octaketide precursor, which could then be directly offloaded by the thiohydrolase enzyme Bref-TH followed by a cytochrome P450 monooxygenase-mediated formation of the cyclopentane ring and macrocyclization to afford 7-deoxy BFA. Alternatively, the first ring annulation can also occur on the ACP-tethered intermediate before the thiohydrolase release and lactonization. The C7-hydroxylation by another cytochrome P450 monooxygenase is believed to be the final step in the process to obtain the final structure of BFA. In addition to the HRPKS Bref-PKS and the thiohydrolase Bref-TH, the brefeldin A biosynthesis cluster contains 4 cytochrome p450 monooxygenases (called orf3 to orf6), as well a the probable cluster-specific transcription regulator orf8. In Eupenicillium brefeldianum (Penicillium brefeldianum), this protein is Cytochrome P450 monooxygenase orf6.